The primary structure comprises 305 residues: Energy-coupling factor transporter ATP-binding protein EcfA2 (305 aa).

The ABC transporter domain maps to 13–262 (LQNVDITFTN…KNLLQELLIE (250 aa)). ATP is bound at residue 55–62 (GSTGSGKS).

Belongs to the ABC transporter superfamily. Energy-coupling factor EcfA family. Forms a stable energy-coupling factor (ECF) transporter complex composed of 2 membrane-embedded substrate-binding proteins (S component), 2 ATP-binding proteins (A component) and 2 transmembrane proteins (T component).

Its subcellular location is the cell membrane. ATP-binding (A) component of a common energy-coupling factor (ECF) ABC-transporter complex. Unlike classic ABC transporters this ECF transporter provides the energy necessary to transport a number of different substrates. The sequence is that of Energy-coupling factor transporter ATP-binding protein EcfA2 from Spiroplasma kunkelii.